A 418-amino-acid chain; its full sequence is Hydroxysteroid dehydrogenase-like protein 2 (418 aa).

NADP(+) is bound by residues 17-23 (GASRGIG), Lys-42, and Asp-74. Position 42 is an N6-(2-hydroxyisobutyryl)lysine (Lys-42). An N6-acetyllysine modification is found at Lys-116. Tyr-168 acts as the Proton acceptor in catalysis. Lys-172 serves as a coordination point for NADP(+). The SCP2 domain maps to 306–415 (RSGAVEETFR…KLEKLMNQMN (110 aa)). At Lys-318 the chain carries N6-succinyllysine.

The protein belongs to the short-chain dehydrogenases/reductases (SDR) family.

Its subcellular location is the peroxisome. It is found in the mitochondrion. Its function is as follows. Has apparently no steroid dehydrogenase activity. Controls bile acid (BA) and lipid metabolism in response to nutritional cues. In Bos taurus (Bovine), this protein is Hydroxysteroid dehydrogenase-like protein 2 (HSDL2).